The sequence spans 562 residues: Transmembrane E3 ubiquitin-protein ligase FLY1 (562 aa).

The first 32 residues, 1–32 (MKKREHLGLGFFEWQIILWLSIWLAISQQALG), serve as a signal peptide directing secretion. Topologically, residues 33 to 262 (LRPIREKPRS…TSVNVEVYYN (230 aa)) are lumenal. Residues 263-283 (KAVNYTLMVTFVSFLQVLLLI) form a helical membrane-spanning segment. Topologically, residues 284-297 (RQMEHGNTQSGAAK) are cytoplasmic. A helical transmembrane segment spans residues 298-318 (VSIVMIGQQAIMDAYLCLLHL). At 319-321 (TAG) the chain is on the lumenal side. The helical transmembrane segment at 322 to 342 (ILVESLFNAFATAAFFKFVVF) threads the bilayer. At 343–373 (SIFEMRYLLAIWKATRPSNSGEGWETMRREL) the chain is on the cytoplasmic side. Residues 374-394 (SFLYSRFYGILLGGILIMYQF) form a helical membrane-spanning segment. At 395–397 (HNY) the chain is on the lumenal side. The chain crosses the membrane as a helical span at residues 398-418 (MQPILLLMYSFWIPQIVANVV). Residues 419–426 (RDSRKPLH) lie on the Cytoplasmic side of the membrane. The chain crosses the membrane as a helical span at residues 427–447 (PYYILGMTATRLAIPLYVFGC). The Lumenal portion of the chain corresponds to 448–458 (PHNFMRVEPNK). The helical transmembrane segment at 459–479 (VWCICLCTFMGLQAVILLLQH) threads the bilayer. Residues 480–562 (YFGSRCFVPR…PTCRRSLPPA (83 aa)) lie on the Cytoplasmic side of the membrane. The RING-type; atypical zinc-finger motif lies at 512-556 (CVICMTAIDLRQHTSDCMVTPCEHFFHSGCLQRWMDIKMECPTCR).

Highly expressed in stems. Expressed in root xylem and seed coat.

The protein resides in the endomembrane system. It carries out the reaction S-ubiquitinyl-[E2 ubiquitin-conjugating enzyme]-L-cysteine + [acceptor protein]-L-lysine = [E2 ubiquitin-conjugating enzyme]-L-cysteine + N(6)-ubiquitinyl-[acceptor protein]-L-lysine.. The protein operates within protein modification; protein ubiquitination. E3 ubiquitin-protein ligase that regulates the degree of methylesterification of pectin in seed mucilage. May be involved in the recycling of pectin methylesterase enzymes in the endomembrane system of seed coat epidermal cells. Possesses E3 ubiquitin-protein ligase activity in vitro when associated with the E1 enzyme UBA1 and the E2 enzyme UBC8. May be involved in xylem development. The sequence is that of Transmembrane E3 ubiquitin-protein ligase FLY1 from Arabidopsis thaliana (Mouse-ear cress).